Reading from the N-terminus, the 127-residue chain is Large ribosomal subunit protein bL12c (127 aa).

A disordered region spans residues 104–127 (GVAKDAAEEAKKQIEDAGGKASLK). The segment covering 105–121 (VAKDAAEEAKKQIEDAG) has biased composition (basic and acidic residues).

Belongs to the bacterial ribosomal protein bL12 family. As to quaternary structure, homodimer. Part of the ribosomal stalk of the 50S ribosomal subunit. Forms a multimeric L10(L12)X complex, where L10 forms an elongated spine to which 2 to 4 L12 dimers bind in a sequential fashion. Binds GTP-bound translation factors.

It is found in the plastid. It localises to the chloroplast. Functionally, forms part of the ribosomal stalk which helps the ribosome interact with GTP-bound translation factors. Is thus essential for accurate translation. The protein is Large ribosomal subunit protein bL12c of Trieres chinensis (Marine centric diatom).